We begin with the raw amino-acid sequence, 199 residues long: Protein GrpE (199 aa).

Belongs to the GrpE family. As to quaternary structure, homodimer.

Its subcellular location is the cytoplasm. Participates actively in the response to hyperosmotic and heat shock by preventing the aggregation of stress-denatured proteins, in association with DnaK and GrpE. It is the nucleotide exchange factor for DnaK and may function as a thermosensor. Unfolded proteins bind initially to DnaJ; upon interaction with the DnaJ-bound protein, DnaK hydrolyzes its bound ATP, resulting in the formation of a stable complex. GrpE releases ADP from DnaK; ATP binding to DnaK triggers the release of the substrate protein, thus completing the reaction cycle. Several rounds of ATP-dependent interactions between DnaJ, DnaK and GrpE are required for fully efficient folding. This Fusobacterium nucleatum subsp. nucleatum (strain ATCC 25586 / DSM 15643 / BCRC 10681 / CIP 101130 / JCM 8532 / KCTC 2640 / LMG 13131 / VPI 4355) protein is Protein GrpE.